We begin with the raw amino-acid sequence, 140 residues long: Organic hydroperoxide resistance protein-like (140 aa).

This sequence belongs to the OsmC/Ohr family.

In Staphylococcus aureus (strain MSSA476), this protein is Organic hydroperoxide resistance protein-like.